The following is a 252-amino-acid chain: MSLLTEVETYVLSIVPSGPLKAEIAQRLEDVFAGKNTDLEALMEWLKTRPILSPLTKGILGFVFTLTVPSERGLQRRRFVQNALNGNGDPNNMDKAVKLYRKLKREITFHGAKEVALSYSAGALASCMGLIYNRMGTVTTEVAFGLVCATCEQIADSQHRSHRQMETTTNPLIRHENRMVLASTTAKAMEQMAGSSEQAAEAMEVASQARQMVQAMRTIGTHPSSSAGLKDDLLENLQAYQKRMGVQMQRFK.

The tract at residues 1–164 is membrane-binding; that stretch reads MSLLTEVETY…ADSQHRSHRQ (164 aa). The short motif at 101–105 is the Nuclear localization signal element; that stretch reads RKLKR. The segment at 165 to 252 is RNP-binding; the sequence is METTTNPLIR…RMGVQMQRFK (88 aa).

It belongs to the influenza viruses Matrix protein M1 family. As to quaternary structure, homodimer and homomultimer. Interacts with NEP. Binds ribonucleocapsid by both interacting with genomic RNA and NP protein. May interact with HA and NA. Cannot bind NP without genomic RNA.

It is found in the virion membrane. It localises to the host nucleus. Functionally, plays critical roles in virus replication, from virus entry and uncoating to assembly and budding of the virus particle. M1 binding to ribonucleocapsids (RNPs) in nucleus seems to inhibit viral transcription. Interaction of viral NEP with M1-RNP is thought to promote nuclear export of the complex, which is targeted to the virion assembly site at the apical plasma membrane in polarized epithelial cells. Interactions with NA and HA may bring M1, a non-raft-associated protein, into lipid rafts. Forms a continuous shell on the inner side of the lipid bilayer in virion, where it binds the RNP. During virus entry into cell, the M2 ion channel acidifies the internal virion core, inducing M1 dissociation from the RNP. M1-free RNPs are transported to the nucleus, where viral transcription and replication can take place. In terms of biological role, determines the virion's shape: spherical or filamentous. Clinical isolates of influenza are characterized by the presence of significant proportion of filamentous virions, whereas after multiple passage on eggs or cell culture, virions have only spherical morphology. Filamentous virions are thought to be important to infect neighboring cells, and spherical virions more suited to spread through aerosol between hosts organisms. The polypeptide is Matrix protein 1 (Influenza A virus (strain A/Swine/Iowa/17672/1988 H1N1)).